The sequence spans 60 residues: Cytotoxin sagitoxin (60 aa).

Intrachain disulfides connect C3-C21, C14-C38, C42-C53, and C54-C59.

This sequence belongs to the three-finger toxin family. Short-chain subfamily. Type IA cytotoxin sub-subfamily. In terms of assembly, monomer in solution; Homodimer and oligomer (homohexamer) in the presence of negatively charged lipids forming a pore with a size ranging between 20 and 30 Angstroms. Expressed by the venom gland.

The protein localises to the secreted. It is found in the target cell membrane. Shows cytolytic activity on many different cells by forming pore in lipid membranes. In vivo, increases heart rate or kill the animal by cardiac arrest. In addition, it binds to heparin with high affinity, interacts with Kv channel-interacting protein 1 (KCNIP1) in a calcium-independent manner, and binds to integrin alpha-V/beta-3 (ITGAV/ITGB3) with moderate affinity. In Naja sagittifera (Andaman cobra), this protein is Cytotoxin sagitoxin.